A 283-amino-acid polypeptide reads, in one-letter code: MTVASIPPHAIGDLQGCCSPLQTLLTALPANAPLRFVGDLVNRGPDSLGTLRRVIMLCEGGRARAVLGNHDIHLLAVAAGVRKLGKRDTLDDILGAPDCDALIHWLRHQPLAIFENGFLMVHAGVLPQWTTGDVLELAGAVERELRSPHWKTFLTDAFGNQPAKWSSDLIGIDRLRLTINALTRLRFCTPDGAMEFETTDADGAPDGHVPWFDVPGRRTRGTPIAFGHWSTRGLVMRDDLLGLDTGCVWGGKLTAARMTLAPAGREVIQVACEQAQDPLAHKK.

Belongs to the Ap4A hydrolase family.

The enzyme catalyses P(1),P(4)-bis(5'-adenosyl) tetraphosphate + H2O = 2 ADP + 2 H(+). In terms of biological role, hydrolyzes diadenosine 5',5'''-P1,P4-tetraphosphate to yield ADP. The protein is Bis(5'-nucleosyl)-tetraphosphatase, symmetrical (apaH) of Ralstonia nicotianae (strain ATCC BAA-1114 / GMI1000) (Ralstonia solanacearum).